The chain runs to 176 residues: MARENRDTQPNDGMQEKLIHINRVSKVVKGGRQFGFAALMVVGDGDGKVGFGRGKAKEVPAGIQKATDQARRWMTSIPLMRGGTIPYPVEGRHGAARVMLRPAPEGSGVIAGGAMRAVCEAVGLRNVVAKSLGSNNPINVVRATFDAFDKLISPQAIAMKRGKSLKEIRGQGGHDE.

An S5 DRBM domain is found at 14-77 (MQEKLIHINR…DQARRWMTSI (64 aa)).

Belongs to the universal ribosomal protein uS5 family. As to quaternary structure, part of the 30S ribosomal subunit. Contacts proteins S4 and S8.

Its function is as follows. With S4 and S12 plays an important role in translational accuracy. Located at the back of the 30S subunit body where it stabilizes the conformation of the head with respect to the body. This chain is Small ribosomal subunit protein uS5, found in Acidithiobacillus ferrooxidans (strain ATCC 23270 / DSM 14882 / CIP 104768 / NCIMB 8455) (Ferrobacillus ferrooxidans (strain ATCC 23270)).